A 241-amino-acid chain; its full sequence is Sugar fermentation stimulation protein homolog (241 aa).

This sequence belongs to the SfsA family.

The sequence is that of Sugar fermentation stimulation protein homolog from Yersinia enterocolitica serotype O:8 / biotype 1B (strain NCTC 13174 / 8081).